Reading from the N-terminus, the 319-residue chain is Lambda-crystallin homolog (319 aa).

Residue A2 is modified to N-acetylalanine. At S3 the chain carries Phosphoserine. NAD(+) contacts are provided by residues 16-17 (LI), D36, E97, and K102.

This sequence belongs to the 3-hydroxyacyl-CoA dehydrogenase family. In terms of assembly, homodimer.

The protein resides in the cytoplasm. It carries out the reaction L-gulonate + NAD(+) = 3-dehydro-L-gulonate + NADH + H(+). With respect to regulation, inhibited by malonate. In terms of biological role, has high L-gulonate 3-dehydrogenase activity. It also exhibits low dehydrogenase activity toward L-3-hydroxybutyrate (HBA) and L-threonate. This Rattus norvegicus (Rat) protein is Lambda-crystallin homolog (Cryl1).